A 309-amino-acid chain; its full sequence is UDP-N-acetylenolpyruvoylglucosamine reductase (309 aa).

An FAD-binding PCMH-type domain is found at leucine 40–glycine 204. The active site involves arginine 182. The active-site Proton donor is the serine 233. The active site involves glutamate 304.

It belongs to the MurB family. The cofactor is FAD.

The protein localises to the cytoplasm. The enzyme catalyses UDP-N-acetyl-alpha-D-muramate + NADP(+) = UDP-N-acetyl-3-O-(1-carboxyvinyl)-alpha-D-glucosamine + NADPH + H(+). It participates in cell wall biogenesis; peptidoglycan biosynthesis. Cell wall formation. In Fervidobacterium nodosum (strain ATCC 35602 / DSM 5306 / Rt17-B1), this protein is UDP-N-acetylenolpyruvoylglucosamine reductase.